A 348-amino-acid chain; its full sequence is GTPase Obg 1 (348 aa).

The region spanning 1 to 159 (MSFVDEAKIH…HCVLLKLKIV (159 aa)) is the Obg domain. The region spanning 160-329 (SDVGIIGMPN…LHAQVKKAVV (170 aa)) is the OBG-type G domain. Residues 166–173 (GMPNAGKS), 191–195 (FTTLE), 212–215 (DIPG), 279–282 (NKCD), and 310–312 (GDE) contribute to the GTP site. Positions 173 and 193 each coordinate Mg(2+).

The protein belongs to the TRAFAC class OBG-HflX-like GTPase superfamily. OBG GTPase family. As to quaternary structure, monomer. Mg(2+) is required as a cofactor.

It is found in the cytoplasm. Its function is as follows. An essential GTPase which binds GTP, GDP and possibly (p)ppGpp with moderate affinity, with high nucleotide exchange rates and a fairly low GTP hydrolysis rate. Plays a role in control of the cell cycle, stress response, ribosome biogenesis and in those bacteria that undergo differentiation, in morphogenesis control. The protein is GTPase Obg 1 of Anaplasma marginale (strain St. Maries).